Reading from the N-terminus, the 564-residue chain is Malignant brain tumor repeat protein 1 (564 aa).

MBT repeat units lie at residues phenylalanine 64–leucine 176, arginine 205–threonine 327, leucine 331–leucine 442, and phenylalanine 450–proline 549.

Interacts with histone H3 that is trimethylated at 'Lys-9' (H3K9me3).

The polypeptide is Malignant brain tumor repeat protein 1 (mbtr-1) (Caenorhabditis elegans).